The following is a 1049-amino-acid chain: Probable ATP-dependent permease (1049 aa).

Residues 1–25 form the signal peptide; sequence MGSHRRYLYYSILSFLLLSCSVVLA. The Lumenal portion of the chain corresponds to 26 to 324; sequence KQDKTPFFEG…KDPTVSWQGK (299 aa). Asn50, Asn114, Asn165, and Asn221 each carry an N-linked (GlcNAc...) asparagine glycan. The chain crosses the membrane as a helical span at residues 325–345; the sequence is LVLALTAVMVLALFTFATFYI. The Cytoplasmic segment spans residues 346–463; that stretch reads SKSPLFRNGL…ISMDRKSFSK (118 aa). The ABC transporter domain maps to 384–631; sequence LSFENITYSV…LRNEGYICPD (248 aa). Residue 423–430 coordinates ATP; sequence GGSGAGKT. The helical transmembrane segment at 464–481 threads the bilayer; it reads IIGFVDQDDFLLPTLTVF. Over 482–793 the chain is Lumenal; sequence ETVLNSALLR…SFKNMYRNPK (312 aa). A phosphoserine mark is found at Ser659 and Ser702. The 252-residue stretch at 793-1044 folds into the ABC transmembrane type-2 domain; the sequence is KLLLGNYLLT…IMGYLALKWI (252 aa). Residues 794-814 form a helical membrane-spanning segment; it reads LLLGNYLLTILLSLFLGTLYY. Residues 815 to 828 are Cytoplasmic-facing; the sequence is NVSNDISGFQNRMG. Residues 829–849 traverse the membrane as a helical segment; it reads LFFFILTYFGFVTFTGLSSFA. Over 850–877 the chain is Lumenal; that stretch reads LERIIFIKERSNNYYSPLAYYISKIMSE. A helical membrane pass occupies residues 878-898; the sequence is VVPLRVVPPILLSLIVYPMTG. Over 899-909 the chain is Cytoplasmic; it reads LNMKDNAFFKC. A helical membrane pass occupies residues 910 to 930; sequence IGILILFNLGISLEILTIGII. Residues 931 to 937 are Lumenal-facing; sequence FEDLNNS. Asn935 carries an N-linked (GlcNAc...) asparagine glycan. Residues 938-958 form a helical membrane-spanning segment; it reads IILSVLVLLGSLLFSGLFINT. The Cytoplasmic portion of the chain corresponds to 959–1000; it reads KNITNVAFKYLKNFSVFYYAYESLLINEVKTLMLKERKYGLN. Residues 1001–1021 traverse the membrane as a helical segment; the sequence is IEVPGATILSTFGFVVQNLVF. Topologically, residues 1022–1024 are lumenal; that stretch reads DIK. The chain crosses the membrane as a helical span at residues 1025–1045; the sequence is ILALFNVVFLIMGYLALKWIV. At 1046–1049 the chain is on the cytoplasmic side; sequence VEQK.

The protein belongs to the ABC transporter superfamily. ABCG family. Eye pigment precursor importer (TC 3.A.1.204) subfamily.

The protein localises to the endoplasmic reticulum membrane. This chain is Probable ATP-dependent permease (ADP1), found in Saccharomyces cerevisiae (strain ATCC 204508 / S288c) (Baker's yeast).